An 82-amino-acid polypeptide reads, in one-letter code: Small ribosomal subunit protein bS16 (82 aa).

This sequence belongs to the bacterial ribosomal protein bS16 family.

The sequence is that of Small ribosomal subunit protein bS16 from Synechocystis sp. (strain ATCC 27184 / PCC 6803 / Kazusa).